Consider the following 340-residue polypeptide: MKFVDMTNITVIAGNGGNGCVSFQKSGRRASFLKKPNGSNGGNGGDVWLLADPNINTLNYFHSNCVFRAGHGQSGRSRGCTGKRGKDVIVKVPWGTRVSYKKTNKLLGDMGIHHKRLMVAKGGRHGLGNGHFKSSLHYCKVLNTNGSTGEFQHLLLELLLIANVGIFGLPNSGKSSFIRIISSAKPKVADYPFTTLVPYLGVVQINNYDRFIIADIPGIIKGASHGLGLGMRFLKHLEHCQILLHFIDIAPVDNSDPLENIITIQHELSNYNENLVRKPCWLIFNKIDLLEQQVAEKRINHVISSLKWKGRYYSISSIHNTNVLSLCNSIMKFIMHHTHS.

Residues 1–161 (MKFVDMTNIT…QHLLLELLLI (161 aa)) form the Obg domain. Residues 162–335 (ANVGIFGLPN…LCNSIMKFIM (174 aa)) form the OBG-type G domain. Residues 168-175 (GLPNSGKS), 193-197 (FTTLV), 215-218 (DIPG), 285-288 (NKID), and 316-318 (SSI) each bind GTP. Mg(2+) is bound by residues Ser175 and Thr195.

This sequence belongs to the TRAFAC class OBG-HflX-like GTPase superfamily. OBG GTPase family. Monomer. The cofactor is Mg(2+).

The protein localises to the cytoplasm. In terms of biological role, an essential GTPase which binds GTP, GDP and possibly (p)ppGpp with moderate affinity, with high nucleotide exchange rates and a fairly low GTP hydrolysis rate. Plays a role in control of the cell cycle, stress response, ribosome biogenesis and in those bacteria that undergo differentiation, in morphogenesis control. The sequence is that of GTPase Obg from Blochmanniella pennsylvanica (strain BPEN).